Here is a 454-residue protein sequence, read N- to C-terminus: Prenyltransferase nscD (454 aa).

The protein belongs to the tryptophan dimethylallyltransferase family.

Its pathway is secondary metabolite biosynthesis. Its function is as follows. Prenyltransferase; part of the gene cluster that mediates the biosynthesis of neosartoricin, a prenylated anthracenone that exhibits T-cell antiproliferative activity, suggestive of a physiological role as an immunosuppressive agent. The non-reducing polyketide synthase nscA probably synthesizes and cyclizes the decaketide backbone. The hydrolase nscB then mediates the product release through hydrolysis followed by spontaneous decarboxylation. The prenyltransferase nscD catalyzes the addition of the dimethylallyl group to the aromatic C5. The FAD-dependent monooxygenase nscC is then responsible for the stereospecific hydroxylation at C2. There is no gene encoding O-acetyltransferase in the nsc gene cluster; thus, the last step of 2-O-acetylation leading to neosartoricin may be catalyzed by an unidentified O-acetyltransferase. In Neosartorya fischeri (strain ATCC 1020 / DSM 3700 / CBS 544.65 / FGSC A1164 / JCM 1740 / NRRL 181 / WB 181) (Aspergillus fischerianus), this protein is Prenyltransferase nscD.